Reading from the N-terminus, the 701-residue chain is Elongation factor G (701 aa).

Positions 8–286 (ERIRNIGIIA…AIVHYLPSPV (279 aa)) constitute a tr-type G domain. GTP is bound by residues 17–24 (AHIDAGKT), 85–89 (DTPGH), and 139–142 (NKMD).

Belongs to the TRAFAC class translation factor GTPase superfamily. Classic translation factor GTPase family. EF-G/EF-2 subfamily.

It is found in the cytoplasm. Catalyzes the GTP-dependent ribosomal translocation step during translation elongation. During this step, the ribosome changes from the pre-translocational (PRE) to the post-translocational (POST) state as the newly formed A-site-bound peptidyl-tRNA and P-site-bound deacylated tRNA move to the P and E sites, respectively. Catalyzes the coordinated movement of the two tRNA molecules, the mRNA and conformational changes in the ribosome. The chain is Elongation factor G from Roseiflexus sp. (strain RS-1).